The chain runs to 225 residues: Small ribosomal subunit protein eS1 (225 aa).

Belongs to the eukaryotic ribosomal protein eS1 family.

This is Small ribosomal subunit protein eS1 from Methanococcus maripaludis (strain C6 / ATCC BAA-1332).